Here is a 414-residue protein sequence, read N- to C-terminus: uncharacterized protein (414 aa).

One can recognise a Nop domain in the interval 246–360 (EAPNITKLAG…LNKRVEEIRR (115 aa)). The segment at 358–414 (IRRKYPKPPKKKKKEKPKAKKKEKKGKKEKSKKKKDKKKDKKGKKERKVIGKTKSRK) is disordered. Residues 361 to 414 (KYPKPPKKKKKEKPKAKKKEKKGKKEKSKKKKDKKKDKKGKKERKVIGKTKSRK) show a composition bias toward basic residues.

It belongs to the NOP5/NOP56 family.

This is an uncharacterized protein from Methanocaldococcus jannaschii (strain ATCC 43067 / DSM 2661 / JAL-1 / JCM 10045 / NBRC 100440) (Methanococcus jannaschii).